The primary structure comprises 192 residues: Acetyltransferase PA3944 (192 aa).

The N-acetyltransferase domain maps to 18–187 (LLLRAWRDSD…RHILYRVDAA (170 aa)). Residues 105 to 107 (WRL), G113, N145, and 150 to 152 (GLM) each bind CoA.

In terms of biological role, catalyzes the transfer of an acetyl group from acetyl coenzyme A (AcCoA) to an acceptor substrate and releases both CoA and the acetylated product. It prefers the peptide Asp-Phe methyl ester (or aspartame) and the peptide antibiotics polymyxin B and colistin. Other substrates like dopamine, serotonin, puromycin, chloramphenicol, D-glucosamine, glycine and N-alpha-acetyl-L-glutamine are used and displayed lower activity. In Pseudomonas aeruginosa (strain ATCC 15692 / DSM 22644 / CIP 104116 / JCM 14847 / LMG 12228 / 1C / PRS 101 / PAO1), this protein is Acetyltransferase PA3944.